Consider the following 87-residue polypeptide: Apolipoprotein C-I (87 aa).

An N-terminal signal peptide occupies residues 1–26; the sequence is MRLILSLPVLAVVLAMVLEGPAPAQA.

The protein belongs to the apolipoprotein C1 family.

It is found in the secreted. Functionally, inhibitor of lipoprotein binding to the low density lipoprotein (LDL) receptor, LDL receptor-related protein, and very low density lipoprotein (VLDL) receptor. Associates with high density lipoproteins (HDL) and the triacylglycerol-rich lipoproteins in the plasma and makes up about 10% of the protein of the VLDL and 2% of that of HDL. Appears to interfere directly with fatty acid uptake and is also the major plasma inhibitor of cholesteryl ester transfer protein (CETP). Binds free fatty acids and reduces their intracellular esterification. Modulates the interaction of APOE with beta-migrating VLDL and inhibits binding of beta-VLDL to the LDL receptor-related protein. The chain is Apolipoprotein C-I (APOC1) from Pteropus vampyrus (Large flying fox).